Here is a 309-residue protein sequence, read N- to C-terminus: Olfactory receptor 4B1 (309 aa).

The Extracellular segment spans residues 1–23 (MASTSNVTELIFTGLFQDPAVQS). Asn6 carries N-linked (GlcNAc...) asparagine glycosylation. The chain crosses the membrane as a helical span at residues 24-47 (VCFVVFLPVYLATVVGNGLIVLTV). The Cytoplasmic segment spans residues 48–55 (SISKSLDS). Residues 56–77 (PMYFFLSCLSLVEISYSSTIAP) traverse the membrane as a helical segment. The Extracellular portion of the chain corresponds to 78–98 (KFIIDLLAKIKTISLEGCLTQ). Cysteines 95 and 187 form a disulfide. A helical membrane pass occupies residues 99–118 (IFFFHFFGVAEILLIVVMAY). Topologically, residues 119–137 (DCYVAICKPLHYMNIISRQ) are cytoplasmic. The chain crosses the membrane as a helical span at residues 138 to 156 (LCHLLVAGSWLGGFCHSII). Residues 157–193 (QILVIIQLPFCGPNVIDHYFCDLQPLFKLACTDTFME) lie on the Extracellular side of the membrane. The helical transmembrane segment at 194–217 (GVIVLANSGLFSVFSFLILVSSYI) threads the bilayer. Topologically, residues 218 to 233 (VILVNLRNHSAEGRHK) are cytoplasmic. A helical transmembrane segment spans residues 234–256 (ALSTCASHITVVILFFGPAIFLY). At 257 to 267 (MRPSSTFTEDK) the chain is on the extracellular side. Residues 268–287 (LVAVFYTVITPMLNPIIYTL) form a helical membrane-spanning segment. At 288 to 309 (RNAEVKIAIRRLWSKKENPGRE) the chain is on the cytoplasmic side.

Belongs to the G-protein coupled receptor 1 family.

Its subcellular location is the cell membrane. In terms of biological role, odorant receptor. The protein is Olfactory receptor 4B1 (OR4B1) of Homo sapiens (Human).